The following is a 644-amino-acid chain: Core protein VP4 (644 aa).

Belongs to the orbivirus VP4 family.

It is found in the virion. In terms of biological role, the VP4 protein is one of the five proteins (with VP1, VP3, VP6 and VP7) which form the inner capsid of the virus. In Bluetongue virus 2 (isolate USA) (BTV 2), this protein is Core protein VP4 (Segment-4).